Consider the following 452-residue polypeptide: tRNA modification GTPase MnmE (452 aa).

(6S)-5-formyl-5,6,7,8-tetrahydrofolate-binding residues include arginine 21, glutamate 82, and arginine 121. One can recognise a TrmE-type G domain in the interval 217 to 373; it reads GINTTIIGKP…LENKIIEMFN (157 aa). Asparagine 227 is a binding site for K(+). Residues 227 to 232, 246 to 252, and 271 to 274 each bind GTP; these read NVGKSS, TDIPGTT, and DTAG. Mg(2+) is bound at residue serine 231. 3 residues coordinate K(+): threonine 246, isoleucine 248, and threonine 251. A Mg(2+)-binding site is contributed by threonine 252. Lysine 452 is a (6S)-5-formyl-5,6,7,8-tetrahydrofolate binding site.

This sequence belongs to the TRAFAC class TrmE-Era-EngA-EngB-Septin-like GTPase superfamily. TrmE GTPase family. In terms of assembly, homodimer. Heterotetramer of two MnmE and two MnmG subunits. K(+) serves as cofactor.

The protein localises to the cytoplasm. Functionally, exhibits a very high intrinsic GTPase hydrolysis rate. Involved in the addition of a carboxymethylaminomethyl (cmnm) group at the wobble position (U34) of certain tRNAs, forming tRNA-cmnm(5)s(2)U34. In Finegoldia magna (strain ATCC 29328 / DSM 20472 / WAL 2508) (Peptostreptococcus magnus), this protein is tRNA modification GTPase MnmE.